The primary structure comprises 1969 residues: TP53-binding protein 1 (1969 aa).

The tract at residues 1-24 is disordered; sequence MPGEQMDPTGSQLDSDFSQQDTPC. Over residues 8–22 the composition is skewed to polar residues; sequence PTGSQLDSDFSQQDT. Phosphoserine is present on residues S30, S68, and S73. The interval 67–168 is disordered; the sequence is VSNPEQSAVE…DSLAAEDSAS (102 aa). Residues 69 to 85 show a composition bias toward polar residues; that stretch reads NPEQSAVEQGDSNSSFN. Over residues 86–95 the composition is skewed to basic and acidic residues; it reads EHLKEKKASD. Over residues 101-110 the composition is skewed to polar residues; sequence HLGTSGSISQ. At S109 the chain carries Phosphoserine. The segment covering 135–148 has biased composition (acidic residues); it reads PEEEKEEEELEEEK. The segment covering 158–168 has biased composition (low complexity); the sequence is ADSLAAEDSAS. 3 positions are modified to phosphoserine: S169, S179, and S181. A Glycyl lysine isopeptide (Lys-Gly) (interchain with G-Cter in SUMO1); alternate cross-link involves residue K220. K220 participates in a covalent cross-link: Glycyl lysine isopeptide (Lys-Gly) (interchain with G-Cter in SUMO2); alternate. Disordered stretches follow at residues 254 to 337, 352 to 599, and 614 to 707; these read EQNL…VSTP, LVQE…CKGR, and DSGS…CPEA. S267 and S268 each carry phosphoserine. Over residues 277 to 288 the composition is skewed to basic and acidic residues; that stretch reads ETKEQVPARELL. Over residues 294–324 the composition is skewed to polar residues; that stretch reads VQPSSEPEVSSTQEDLFDQSSKTASDGCSTP. A Phosphoserine modification is found at S297. Position 305 is a phosphothreonine (T305). 3 positions are modified to phosphoserine: S368, S382, and S397. Positions 407 to 419 are enriched in basic and acidic residues; the sequence is QKLHDDEAMETEK. Over residues 426-442 the composition is skewed to polar residues; that stretch reads PAVSPQASTPVSRSTPV. Phosphoserine occurs at positions 429, 452, and 464. A compositionally biased stretch (polar residues) spans 481–490; the sequence is HSSSLTVECS. Over residues 491–501 the composition is skewed to basic and acidic residues; that stretch reads KTSESEPKNFT. Phosphoserine occurs at positions 507, 518, 523, and 525. Polar residues predominate over residues 517–528; it reads LSTSEYSQSSKM. 2 positions are modified to phosphothreonine: T543 and T548. Phosphoserine occurs at positions 552 and 579. A compositionally biased stretch (polar residues) spans 566-582; that stretch reads VLVTPSQDDQVEMSQNV. Positions 583 to 599 are enriched in basic and acidic residues; that stretch reads DKAKEDETEDRGDCKGR. Residues 614–634 are compositionally biased toward polar residues; sequence DSGSQAVPSPATRSEALSSVL. 4 positions are modified to phosphoserine: S622, S627, S631, and S632. Residues 640-649 are compositionally biased toward basic and acidic residues; the sequence is MDTKEHHPEE. The residue at position 662 (T662) is a Phosphothreonine. Residues 666-675 are compositionally biased toward basic and acidic residues; that stretch reads SHREEPKEEP. S684, S716, S719, and S763 each carry phosphoserine. Residues 754 to 870 are disordered; sequence KEPSPRADVS…DDKQLGPEGA (117 aa). A compositionally biased stretch (basic and acidic residues) spans 790–818; it reads AENRLDTPEEKRIECDGDSKAETTEKDAV. S822 carries the phosphoserine modification. Over residues 830-839 the composition is skewed to basic and acidic residues; that stretch reads VRDEPVRPDQ. Residue T912 is modified to Phosphothreonine. A Glycyl lysine isopeptide (Lys-Gly) (interchain with G-Cter in SUMO2) cross-link involves residue K920. The interval 927-1017 is disordered; the sequence is STPIGISNYP…GSTAIAEPVA (91 aa). Residues 935–949 are compositionally biased toward polar residues; the sequence is YPESTIATSDVTSES. Residues 961–975 are compositionally biased toward basic and acidic residues; the sequence is EKGDSESAPEMDGKL. Residue S965 is modified to Phosphoserine. A Glycyl lysine isopeptide (Lys-Gly) (interchain with G-Cter in SUMO2) cross-link involves residue K974. S1018 carries the post-translational modification Phosphoserine. Disordered regions lie at residues 1034 to 1144, 1178 to 1231, and 1267 to 1478; these read QEKE…MDRP, GTST…PHGH, and TEET…DSSS. Positions 1060–1074 are enriched in basic and acidic residues; that stretch reads EEDKERPDVTPKLRQ. S1075 and S1096 each carry phosphoserine. A compositionally biased stretch (low complexity) spans 1099–1112; the sequence is SQQRASQEQRASQE. S1115 carries the post-translational modification Phosphoserine. Residues 1178–1197 show a composition bias toward polar residues; that stretch reads GTSTAEQNSGKQDATVQTER. T1211 bears the Phosphothreonine mark. Phosphoserine is present on residues S1213 and S1216. Positions 1269–1282 are enriched in acidic residues; sequence ETEEPIVECQECET. Over residues 1295–1326 the composition is skewed to low complexity; sequence DLGDISSFSSKASSSHHTSSGTSLSAIHSSGS. S1314 carries the phosphoserine modification. R1329 is subject to Omega-N-methylarginine. S1339 carries the phosphoserine modification. The residue at position 1352 (R1352) is an Omega-N-methylarginine. S1359 is subject to Phosphoserine. K1362 is covalently cross-linked (Glycyl lysine isopeptide (Lys-Gly) (interchain with G-Cter in SUMO2)). Phosphoserine is present on S1365. Residues 1393-1400 carry the GAR motif; that stretch reads RGRGRRGR. A phosphoserine mark is found at S1423 and S1427. K1431 participates in a covalent cross-link: Glycyl lysine isopeptide (Lys-Gly) (interchain with G-Cter in SUMO1); alternate. Residue K1431 forms a Glycyl lysine isopeptide (Lys-Gly) (interchain with G-Cter in SUMO2); alternate linkage. Phosphoserine occurs at positions 1457, 1459, 1470, and 1471. The segment covering 1469–1478 has biased composition (low complexity); that stretch reads GSSDGLDSSS. The tract at residues 1481–1600 is tudor-like; that stretch reads NSFVGLRVVA…NRLREQYGLG (120 aa). Positions 1492–1520 are interaction with dimethylated histone H4; sequence WSSNGYFYSGKITRDVGAGKYKLLFDDGY. Residue K1560 forms a Glycyl lysine isopeptide (Lys-Gly) (interchain with G-Cter in SUMO1); alternate linkage. K1560 is covalently cross-linked (Glycyl lysine isopeptide (Lys-Gly) (interchain with G-Cter in SUMO2); alternate). The short motif at 1601-1628 is the UDR element; it reads PYEAVTPLTKAADISLDNLVEGKRKRRS. Position 1606 is a phosphothreonine (T1606). Phosphoserine is present on residues S1615, S1628, and S1632. The interval 1624-1715 is disordered; sequence RKRRSNISSP…IGEPSVLEEP (92 aa). Residues 1631–1648 are compositionally biased toward low complexity; it reads SSPVTPTAASSSSTTPTR. T1635 and T1645 each carry phosphothreonine. S1653, S1670, and S1675 each carry phosphoserine. Residue K1682 forms a Glycyl lysine isopeptide (Lys-Gly) (interchain with G-Cter in ubiquitin) linkage. 2 positions are modified to phosphoserine: S1698 and S1756. 2 BRCT domains span residues 1749-1845 and 1861-1961; these read LDGP…NYLL and PREN…QHPK.

In terms of assembly, homoligomer. Interacts with p53/TP53 (via the central domain). Interacts with DCLRE1C. Interacts with histone H2AX and this requires phosphorylation of H2AX on 'Ser-139'. Interacts with histone H4 that has been dimethylated at 'Lys-20' (H4K20me2). Has low affinity for histone H4 containing monomethylated 'Lys-20' (H4K20me1). Does not bind histone H4 containing unmethylated or trimethylated 'Lys-20' (H4K20me3). Has low affinity for histone H3 that has been dimethylated on 'Lys-79'. Has very low affinity for histone H3 that has been monomethylated on 'Lys-79' (in vitro). Does not bind unmethylated histone H3. Interacts with histone H2A monoubiquitinated at 'Lys-15' (H2AK15Ub). Interacts with PWWP3A/EXPAND1. Interacts with CHEK2; modulates CHEK2 phosphorylation at 'Thr-68' in response to infrared. Interacts with MSL1; this interaction may be required for MSL1 DNA repair activity, but not for histone acetyltransferase activity. Interacts (when phosphorylated by ATM) with RIF1. Interacts (via the Tudor-like domain) with NUDT16L1/TIRR; interaction masks the Tudor-like domain and prevents recruitment to chromatin. Interacts with PAXIP1. Interacts with IFI202A. Interacts with SHLD2. Interacts (when phosphorylated) with TOPBP1. Interacts with GFI1; promoting methylation by PRMT1. Interacts with (phosphorylated) DYNLL1; specifically binds DYNLL1 phosphorylated at 'Ser-88' and promotes its recruitment to double stand breaks (DSBs). Phosphorylated at basal level in the absence of DNA damage. Phosphorylated by ATM in response to DNA damage: phosphorylation at different sites promotes interaction with different set of proteins: phosphorylation at the N-terminus by ATM (residues from 11-181) promotes interaction with PAXIP1 and non-homologous end joining (NHEJ) of dysfunctional telomeres. Phosphorylation by ATM at residues that are located more C-terminus (residues 300-650) leads to promote interaction with RIF1. Interaction with RIF1 leads to disrupt interaction with NUDT16L1/TIRR. Phosphorylation at Thr-1606 and Ser-1615 in the UDR motif blocks interaction with H2AK15ub. Dephosphorylated by PPP4C. Hyperphosphorylation during mitosis correlates with its exclusion from chromatin and DNA lesions. Hyperphosphorylated in an ATR-dependent manner in response to DNA damage induced by UV irradiation. Dephosphorylated by PPP5C. Phosphorylation at Ser-368 and Thr-662 promotes interaction with TOPBP1. Phosphorylated by VRK1. In terms of processing, asymmetrically dimethylated on Arg residues by PRMT1. Methylation is required for DNA binding. Post-translationally, monoubiquitinated at Lys-1682 by MSL2 is reponse to DNA damage, leading to its stabilization.

Its subcellular location is the nucleus. The protein localises to the chromosome. It localises to the centromere. The protein resides in the kinetochore. Functionally, double-strand break (DSB) repair protein involved in response to DNA damage, telomere dynamics and class-switch recombination (CSR) during antibody genesis. Plays a key role in the repair of double-strand DNA breaks (DSBs) in response to DNA damage by promoting non-homologous end joining (NHEJ)-mediated repair of DSBs and specifically counteracting the function of the homologous recombination (HR) repair protein BRCA1. In response to DSBs, phosphorylation by ATM promotes interaction with RIF1 and dissociation from NUDT16L1/TIRR, leading to recruitment to DSBs sites. Recruited to DSBs sites by recognizing and binding histone H2A monoubiquitinated at 'Lys-15' (H2AK15Ub) and histone H4 dimethylated at 'Lys-20' (H4K20me2), two histone marks that are present at DSBs sites. Required for immunoglobulin class-switch recombination (CSR) during antibody genesis, a process that involves the generation of DNA DSBs. Participates in the repair and the orientation of the broken DNA ends during CSR. In contrast, it is not required for classic NHEJ and V(D)J recombination. Promotes NHEJ of dysfunctional telomeres. The sequence is that of TP53-binding protein 1 from Mus musculus (Mouse).